Here is a 214-residue protein sequence, read N- to C-terminus: UPF0056 membrane protein aq_540 (214 aa).

The next 6 membrane-spanning stretches (helical) occupy residues 17-37 (FLSL…ISLM), 47-67 (VIAL…LISG), 73-93 (FMGI…FLIA), 122-142 (LIPL…VLVL), 153-173 (VALF…YSLS), and 185-205 (INLI…QFVV).

The protein belongs to the UPF0056 (MarC) family.

It localises to the cell membrane. In Aquifex aeolicus (strain VF5), this protein is UPF0056 membrane protein aq_540.